A 154-amino-acid chain; its full sequence is UPF0260 protein HI_1355 (154 aa).

Belongs to the UPF0260 family.

The sequence is that of UPF0260 protein HI_1355 from Haemophilus influenzae (strain ATCC 51907 / DSM 11121 / KW20 / Rd).